Reading from the N-terminus, the 195-residue chain is Putative C-P lyase subunit protein HtxG (195 aa).

This sequence belongs to the PhnH family.

Functionally, belongs to an operon involved in hypophosphite oxidation. Exact function not known. The polypeptide is Putative C-P lyase subunit protein HtxG (htxG) (Stutzerimonas stutzeri (Pseudomonas stutzeri)).